The following is a 194-amino-acid chain: Peptidyl-tRNA hydrolase (194 aa).

A tRNA-binding site is contributed by tyrosine 16. Residue histidine 21 is the Proton acceptor of the active site. TRNA-binding residues include phenylalanine 67, asparagine 69, and asparagine 115.

Belongs to the PTH family. Monomer.

The protein resides in the cytoplasm. The catalysed reaction is an N-acyl-L-alpha-aminoacyl-tRNA + H2O = an N-acyl-L-amino acid + a tRNA + H(+). Its function is as follows. Hydrolyzes ribosome-free peptidyl-tRNAs (with 1 or more amino acids incorporated), which drop off the ribosome during protein synthesis, or as a result of ribosome stalling. Catalyzes the release of premature peptidyl moieties from peptidyl-tRNA molecules trapped in stalled 50S ribosomal subunits, and thus maintains levels of free tRNAs and 50S ribosomes. The sequence is that of Peptidyl-tRNA hydrolase from Escherichia coli O81 (strain ED1a).